The chain runs to 213 residues: MDTIWDISPPIAPATPVWPGDTPVGIERVWRIEAGSPVNVARVTLSPHTGAHADAPLHYDADGTPIGAVPLDAYLGRCRVIHCIGARSAVTPEHVRAALAGAPPRVLLRTYGQAPQHAWDSAFCAVAPETIDLLAAHGVRLVGIDTPSLDPQESKTMDAHRRIRAHRMAILEGLVLDEIAAGDYELIALPLKFATLDASPVRAVLRALPAAPR.

Residue Trp-18 participates in substrate binding. His-48, His-52, and Asp-54 together coordinate Zn(2+). The Proton donor/acceptor role is filled by His-58. Zn(2+) is bound by residues His-160 and Glu-172.

Belongs to the Cyclase 1 superfamily. KynB family. In terms of assembly, homodimer. Zn(2+) serves as cofactor.

It carries out the reaction N-formyl-L-kynurenine + H2O = L-kynurenine + formate + H(+). It functions in the pathway amino-acid degradation; L-tryptophan degradation via kynurenine pathway; L-kynurenine from L-tryptophan: step 2/2. In terms of biological role, catalyzes the hydrolysis of N-formyl-L-kynurenine to L-kynurenine, the second step in the kynurenine pathway of tryptophan degradation. The chain is Kynurenine formamidase from Burkholderia mallei (strain NCTC 10247).